The sequence spans 121 residues: MKKNTNFTQINNNFYRLVDDLFLKIEDNLNFYDDKIDIDYEVQDYVMTITFLNKSIIVVNKQESLRQIWLATKFNAYHFNYKIDKWICNRSNKDFWEIFEKSCSIQSNENLIFTAFKRIKK.

The protein belongs to the frataxin family.

Involved in iron-sulfur (Fe-S) cluster assembly. May act as a regulator of Fe-S biogenesis. The protein is Iron-sulfur cluster assembly protein CyaY of Buchnera aphidicola subsp. Schizaphis graminum (strain Sg).